Consider the following 159-residue polypeptide: Phosphopantetheine adenylyltransferase (159 aa).

Thr-9 provides a ligand contact to substrate. ATP contacts are provided by residues 9–10 (TF) and His-17. Residues Lys-41, Leu-73, and Arg-87 each contribute to the substrate site. ATP-binding positions include 88-90 (GLR), Glu-98, and 123-129 (YSFISST).

Belongs to the bacterial CoaD family. Homohexamer. It depends on Mg(2+) as a cofactor.

The protein resides in the cytoplasm. The enzyme catalyses (R)-4'-phosphopantetheine + ATP + H(+) = 3'-dephospho-CoA + diphosphate. It participates in cofactor biosynthesis; coenzyme A biosynthesis; CoA from (R)-pantothenate: step 4/5. In terms of biological role, reversibly transfers an adenylyl group from ATP to 4'-phosphopantetheine, yielding dephospho-CoA (dPCoA) and pyrophosphate. This Pseudomonas putida (strain ATCC 700007 / DSM 6899 / JCM 31910 / BCRC 17059 / LMG 24140 / F1) protein is Phosphopantetheine adenylyltransferase.